A 417-amino-acid chain; its full sequence is UDP-N-acetylglucosamine 1-carboxyvinyltransferase 2 (417 aa).

A phosphoenolpyruvate-binding site is contributed by Lys-22–Asn-23. A UDP-N-acetyl-alpha-D-glucosamine-binding site is contributed by Arg-92. Residue Cys-116 is the Proton donor of the active site. Cys-116 bears the 2-(S-cysteinyl)pyruvic acid O-phosphothioketal mark. UDP-N-acetyl-alpha-D-glucosamine-binding positions include Arg-121–Leu-125, Asp-305, and Ile-327.

The protein belongs to the EPSP synthase family. MurA subfamily.

The protein resides in the cytoplasm. It catalyses the reaction phosphoenolpyruvate + UDP-N-acetyl-alpha-D-glucosamine = UDP-N-acetyl-3-O-(1-carboxyvinyl)-alpha-D-glucosamine + phosphate. It participates in cell wall biogenesis; peptidoglycan biosynthesis. Functionally, cell wall formation. Adds enolpyruvyl to UDP-N-acetylglucosamine. This Caldanaerobacter subterraneus subsp. tengcongensis (strain DSM 15242 / JCM 11007 / NBRC 100824 / MB4) (Thermoanaerobacter tengcongensis) protein is UDP-N-acetylglucosamine 1-carboxyvinyltransferase 2.